A 192-amino-acid chain; its full sequence is Leucine-rich repeat-containing protein 51 (192 aa).

3 LRR repeats span residues 49–71, 80–101, and 103–124; these read SLTQSLWLNNNVLNDLKDFNQVV, NLAWIDLSFNDLTTIDPVLTTF, and NLSVLYLHGNSIHRLGEVNKLA. The region spanning 137–175 is the LRRCT domain; it reads NPIEEEKGYRQYVLCNLPRITTFDFSGVTKADRSTAEVW.

Its subcellular location is the cytoplasm. In Rattus norvegicus (Rat), this protein is Leucine-rich repeat-containing protein 51.